Here is a 190-residue protein sequence, read N- to C-terminus: Guanylate kinase (190 aa).

The Guanylate kinase-like domain maps to 8 to 188 (GRLVILAGPS…AVKAIEDVLL (181 aa)). Residue 15-22 (GPSAVGKS) participates in ATP binding.

It belongs to the guanylate kinase family.

It is found in the cytoplasm. It catalyses the reaction GMP + ATP = GDP + ADP. Its function is as follows. Essential for recycling GMP and indirectly, cGMP. This Corynebacterium glutamicum (strain ATCC 13032 / DSM 20300 / JCM 1318 / BCRC 11384 / CCUG 27702 / LMG 3730 / NBRC 12168 / NCIMB 10025 / NRRL B-2784 / 534) protein is Guanylate kinase.